The following is a 252-amino-acid chain: Electron transfer flavoprotein subunit beta (252 aa).

The protein belongs to the ETF beta-subunit/FixA family. As to quaternary structure, heterodimer of an alpha and a beta subunit. AMP is required as a cofactor.

The protein resides in the cytoplasm. It participates in lipid metabolism; butanoate metabolism. Its function is as follows. Part of an electron transfer flavoprotein involved in syntrophic growth of S.wolfei with butyrate. Probably receives electrons from butyryl-CoA dehydrogenases, and transfers them to the membrane-bound quinone oxidoreductase Swol_0698. The protein is Electron transfer flavoprotein subunit beta of Syntrophomonas wolfei subsp. wolfei (strain DSM 2245B / Goettingen).